The chain runs to 256 residues: Putative adhesin P1-like protein MPN_132 (256 aa).

Positions 56–72 (AVSESQAATSSTTTTAT) are enriched in low complexity. Disordered stretches follow at residues 56-115 (AVSE…PYLH) and 149-235 (FGTD…EVVG). Over residues 96–112 (KASTQGSGQTNSQNTSP) the composition is skewed to polar residues. 2 stretches are compositionally biased toward low complexity: residues 155–179 (TQPQ…LGSV) and 211–222 (STSDGNTSSTNN).

The protein belongs to the adhesin P1 family.

The polypeptide is Putative adhesin P1-like protein MPN_132 (Mycoplasma pneumoniae (strain ATCC 29342 / M129 / Subtype 1) (Mycoplasmoides pneumoniae)).